A 733-amino-acid chain; its full sequence is MRWTLMLQLLQLLLQLLMAQSQSLERISQDRIPLFRLTQQGDWDSLDRHPTDSLCVGLPAAGVTTLNLANRSLESLPSCLPRTLRSLDGSHNLLRALSEPVLGRLPELRVLTLHHNRISVLHWGRDTLAELRELDLSHNLLTELPPCAGPSGSSLRSLALAGNPLRALLPRTFACFPALRLLNLSCSELGHIAQEAFAGVDGGPLAALELLDLSGTSLERVESGWIRNLPKLKSLFLRKMPRLKTLEGDIFKMTPNLRQLDCGDSPALTSVHTEIFQDTPNLQVLQFQNCNLSSFGPWNSSQVLSVSLFGNPLICSCELAWLLVDVNKTVLHRAADTMCEPALGSTGPFSGPLSLSHLSNVCRSDQSTTLLPSNPGRFDHSVFAPRIQGPSIEQSTALSAQPGGSQQNITKVPSLTMTSPTQGSWMYKDASEETAQSTNSELVYSPSRALPGAASSGAEQTATHILEPNISSASTPLVSKYLEPLPTSPNPRSLPQTKQRTQATPRALHTDPPQDEIPVLLLDDDSEEEETRDQVAAPPQDVSCEYHPCKHLQTPCAELQRRFRCRCPGLSGEDTTPDPPTLQGVSEVTDTSVLVHWCAPNSVVLWYQIHYVAEGRSGNQSVVDIYATARQHPLYKLTPGTTYHVCVLAANRAGLSQSQTSGWRRSCATFTTKPSSVVIFWGLCTASGLLLVSTLVLSVCLWRQRWKPHRQFYDTHLVAFKNPARAEEVTQWE.

Residues 1 to 19 (MRWTLMLQLLQLLLQLLMA) form the signal peptide. At 20-676 (QSQSLERISQ…CATFTTKPSS (657 aa)) the chain is on the extracellular side. LRR repeat units lie at residues 62 to 82 (GVTT…CLPR), 83 to 106 (TLRS…GRLP), 107 to 128 (ELRV…RDTL), 130 to 151 (ELRE…AGPS), 154 to 175 (SLRS…TFAC), 178 to 199 (ALRL…AFAG), 207 to 230 (ALEL…RNLP), 231 to 253 (KLKS…IFKM), 256 to 278 (NLRQ…IFQD), and 281 to 302 (NLQV…NSSQ). Asparagine 70 carries an N-linked (GlcNAc...) asparagine glycan. Asparagine 183 carries N-linked (GlcNAc...) asparagine glycosylation. N-linked (GlcNAc...) asparagine glycosylation is found at asparagine 291, asparagine 299, asparagine 327, asparagine 408, and asparagine 469. The 54-residue stretch at 311-364 (NPLICSCELAWLLVDVNKTVLHRAADTMCEPALGSTGPFSGPLSLSHLSNVCRS) folds into the LRRCT domain. The interval 395-423 (STALSAQPGGSQQNITKVPSLTMTSPTQG) is disordered. The disordered stretch occupies residues 480–518 (KYLEPLPTSPNPRSLPQTKQRTQATPRALHTDPPQDEIP). Over residues 490 to 504 (NPRSLPQTKQRTQAT) the composition is skewed to polar residues. In terms of domain architecture, Fibronectin type-III spans 576–675 (TPDPPTLQGV…SCATFTTKPS (100 aa)). Asparagine 619 carries N-linked (GlcNAc...) asparagine glycosylation. The chain crosses the membrane as a helical span at residues 677–697 (VVIFWGLCTASGLLLVSTLVL). Residues 698-733 (SVCLWRQRWKPHRQFYDTHLVAFKNPARAEEVTQWE) lie on the Cytoplasmic side of the membrane.

It is found in the membrane. Functionally, may play an important role in hippocampus-dependent long-lasting memory. The polypeptide is Leucine-rich repeat neuronal protein 4 (Lrrn4) (Mus musculus (Mouse)).